A 353-amino-acid chain; its full sequence is Glutamate 5-kinase (353 aa).

Lysine 8 provides a ligand contact to ATP. Residues serine 47, aspartate 134, and asparagine 146 each coordinate substrate. 198–204 (TGGIRSK) contacts ATP. Residues 262–339 (AGKIYVNKGA…SDLKKILGYE (78 aa)) form the PUA domain.

The protein belongs to the glutamate 5-kinase family.

The protein resides in the cytoplasm. The catalysed reaction is L-glutamate + ATP = L-glutamyl 5-phosphate + ADP. The protein operates within amino-acid biosynthesis; L-proline biosynthesis; L-glutamate 5-semialdehyde from L-glutamate: step 1/2. Functionally, catalyzes the transfer of a phosphate group to glutamate to form L-glutamate 5-phosphate. The protein is Glutamate 5-kinase of Thermotoga maritima (strain ATCC 43589 / DSM 3109 / JCM 10099 / NBRC 100826 / MSB8).